The following is a 485-amino-acid chain: Adenosylhomocysteinase 1 (485 aa).

Residues Thr-64, Asp-139, and Glu-205 each contribute to the substrate site. 206–208 (TTT) provides a ligand contact to NAD(+). Substrate-binding residues include Lys-235 and Asp-239. NAD(+) is bound by residues 271-276 (GDVGKG), Glu-292, 348-350 (IGH), Asn-397, His-404, Lys-479, 479-483 (KPPHY), and Tyr-483.

Belongs to the adenosylhomocysteinase family. As to quaternary structure, homotetramer. It depends on NAD(+) as a cofactor.

It carries out the reaction S-adenosyl-L-homocysteine + H2O = L-homocysteine + adenosine. It participates in amino-acid biosynthesis; L-homocysteine biosynthesis; L-homocysteine from S-adenosyl-L-homocysteine: step 1/1. Its function is as follows. Essential protein during embryogenesis. Adenosylhomocysteine is a competitive inhibitor of S-adenosyl-L-methionine-dependent methyl transferase reactions; therefore adenosylhomocysteinase may play a key role in the control of methylations via regulation of the intracellular concentration of adenosylhomocysteine. Required for DNA methylation-dependent gene silencing. This chain is Adenosylhomocysteinase 1, found in Arabidopsis thaliana (Mouse-ear cress).